The primary structure comprises 935 residues: Formin-I (935 aa).

The stretch at 35–76 (QQQQQQQQQQINNENENSINNQENKENNNKDNNNNNNKEIKQ) forms a coiled coil. 3 disordered regions span residues 52–78 (SINN…KQSS), 380–511 (LSSA…QLTP), and 561–590 (KEKM…QSLS). Low complexity predominate over residues 384-407 (KKQPQQQPQKDVTSSSSSSSNSSS). Positions 418–428 (ITTNDSSSSNP) are enriched in polar residues. The segment covering 431 to 443 (DFDKLSLSSDDKV) has biased composition (basic and acidic residues). Residues 444–454 (NNNNVQIENTT) are compositionally biased toward polar residues. Residues 444-505 (NNNNVQIENT…KPNNSGGGGG (62 aa)) form the FH1 domain. The span at 456–482 (SVPPPPPVGAPPPPPPPPPPPPPPPPS) shows a compositional bias: pro residues. The span at 484–499 (LKLNRNRISTPKKPNN) shows a compositional bias: polar residues. The 430-residue stretch at 506–935 (GGQLTPLQKK…SLNLSTLNSK (430 aa)) folds into the FH2 domain. The span at 568–583 (NLNNSNNNNNNNSNNN) shows a compositional bias: low complexity. 2 coiled-coil regions span residues 702–730 (SLLD…FIKV) and 803–834 (QSSL…QQLL).

It belongs to the formin homology family. Diaphanous subfamily.

In terms of biological role, formins play an important role in the nucleation of actin and the formation of linear actin filaments. This chain is Formin-I (forI), found in Dictyostelium discoideum (Social amoeba).